A 645-amino-acid chain; its full sequence is Sister chromatid cohesion protein 1 (645 aa).

Disordered regions lie at residues 292–311 (FEPENVEPSRPQSPESFALE), 495–527 (QSGFAGENKENEDAEDWSDPFGSSNSSRRGQLE), and 619–645 (CPLSSPKPMGLGNTMENSTMRTPMRPV).

It belongs to the rad21 family. As to quaternary structure, component of the cohesin complex, composed of the smc-1 and smc-3 heterodimer attached via their hinge domain, scc-1 which links them, and scc-3. Interacts with smc-1, smc-3, scc-3 and tim-1.

It localises to the nucleus. It is found in the chromosome. The protein resides in the cytoplasm. Functionally, cleavable component of the cohesin complex involved in chromosome cohesion during cell cycle. The cohesin complex is required for the cohesion of sister chromatids after DNA replication. The cohesin complex apparently forms a large proteinaceous ring within which sister chromatids can be trapped. At metaphase-anaphase transition, this protein is cleaved and dissociates from chromatin, allowing sister chromatids to segregate. The protein is Sister chromatid cohesion protein 1 of Caenorhabditis elegans.